We begin with the raw amino-acid sequence, 1285 residues long: Dermonecrotic toxin (1285 aa).

Residues 402–422 (MLVPAVGIPINFALSATALGL) traverse the membrane as a helical segment.

The protein resides in the cytoplasm. Its subcellular location is the secreted. The protein localises to the host membrane. This is a dermonecrotic toxin. This osteolytic toxin, induces bone resorption. Potent mitogen. This toxin is associated with the severe progressive form of the atrophic rhinitis, a major respiratory disease in pigs. The sequence is that of Dermonecrotic toxin (toxA) from Pasteurella multocida.